The sequence spans 157 residues: Peroxiredoxin Bcp (157 aa).

The Thioredoxin domain occupies 3–156 (IEIGQKAPDL…ALQTLKDMSE (154 aa)). The Cysteine sulfenic acid (-SOH) intermediate role is filled by C45. C45 and C50 are joined by a disulfide.

Belongs to the peroxiredoxin family. BCP/PrxQ subfamily. In terms of assembly, monomer.

It catalyses the reaction a hydroperoxide + [thioredoxin]-dithiol = an alcohol + [thioredoxin]-disulfide + H2O. Functionally, thiol-specific peroxidase that catalyzes the reduction of hydrogen peroxide and organic hydroperoxides to water and alcohols, respectively. Plays a role in cell protection against oxidative stress by detoxifying peroxides and as sensor of hydrogen peroxide-mediated signaling events. This Bacillus subtilis (strain 168) protein is Peroxiredoxin Bcp (ygaF).